Reading from the N-terminus, the 454-residue chain is tRNA modification GTPase MnmE (454 aa).

The (6S)-5-formyl-5,6,7,8-tetrahydrofolate site is built by Arg-23, Glu-80, and Lys-120. The 162-residue stretch at Gly-216 to Gly-377 folds into the TrmE-type G domain. Asn-226 serves as a coordination point for K(+). GTP-binding positions include Asn-226–Ser-231, Thr-245–Thr-251, and Asp-270–Gly-273. Ser-230 contacts Mg(2+). K(+)-binding residues include Thr-245, Ile-247, and Thr-250. Thr-251 is a binding site for Mg(2+). Lys-454 provides a ligand contact to (6S)-5-formyl-5,6,7,8-tetrahydrofolate.

It belongs to the TRAFAC class TrmE-Era-EngA-EngB-Septin-like GTPase superfamily. TrmE GTPase family. In terms of assembly, homodimer. Heterotetramer of two MnmE and two MnmG subunits. K(+) is required as a cofactor.

The protein localises to the cytoplasm. Exhibits a very high intrinsic GTPase hydrolysis rate. Involved in the addition of a carboxymethylaminomethyl (cmnm) group at the wobble position (U34) of certain tRNAs, forming tRNA-cmnm(5)s(2)U34. This chain is tRNA modification GTPase MnmE, found in Mannheimia succiniciproducens (strain KCTC 0769BP / MBEL55E).